A 403-amino-acid polypeptide reads, in one-letter code: Phosphopentomutase (403 aa).

Positions 13, 298, 303, 339, 340, and 351 each coordinate Mn(2+).

This sequence belongs to the phosphopentomutase family. Mn(2+) serves as cofactor.

It is found in the cytoplasm. The enzyme catalyses 2-deoxy-alpha-D-ribose 1-phosphate = 2-deoxy-D-ribose 5-phosphate. It carries out the reaction alpha-D-ribose 1-phosphate = D-ribose 5-phosphate. It functions in the pathway carbohydrate degradation; 2-deoxy-D-ribose 1-phosphate degradation; D-glyceraldehyde 3-phosphate and acetaldehyde from 2-deoxy-alpha-D-ribose 1-phosphate: step 1/2. Its function is as follows. Isomerase that catalyzes the conversion of deoxy-ribose 1-phosphate (dRib-1-P) and ribose 1-phosphate (Rib-1-P) to deoxy-ribose 5-phosphate (dRib-5-P) and ribose 5-phosphate (Rib-5-P), respectively. This Streptococcus pneumoniae (strain JJA) protein is Phosphopentomutase.